The following is a 65-amino-acid chain: U11-theraphotoxin-Cg1a (65 aa).

The signal sequence occupies residues 1–21 (MKTTILLVILGLTLLFALSAA). The propeptide occupies 22–29 (TELKDEER). 3 disulfides stabilise this stretch: cysteine 31–cysteine 45, cysteine 38–cysteine 50, and cysteine 44–cysteine 57.

The protein belongs to the neurotoxin 10 (Hwtx-1) family. 32 (Jztx-16) subfamily. As to expression, expressed by the venom gland.

It localises to the secreted. Functionally, probable ion channel inhibitor. The sequence is that of U11-theraphotoxin-Cg1a from Chilobrachys guangxiensis (Chinese earth tiger tarantula).